A 599-amino-acid chain; its full sequence is Aspartate--tRNA(Asp/Asn) ligase (599 aa).

Glu-172 provides a ligand contact to L-aspartate. The aspartate stretch occupies residues 196-199; sequence QLFK. Arg-218 is a binding site for L-aspartate. ATP is bound by residues 218-220 and Gln-227; that span reads RDE. Residue His-455 coordinates L-aspartate. Glu-489 serves as a coordination point for ATP. L-aspartate is bound at residue Arg-496. ATP is bound at residue 541–544; the sequence is GLDR.

It belongs to the class-II aminoacyl-tRNA synthetase family. Type 1 subfamily. As to quaternary structure, homodimer.

It localises to the cytoplasm. It carries out the reaction tRNA(Asx) + L-aspartate + ATP = L-aspartyl-tRNA(Asx) + AMP + diphosphate. Functionally, aspartyl-tRNA synthetase with relaxed tRNA specificity since it is able to aspartylate not only its cognate tRNA(Asp) but also tRNA(Asn). Reaction proceeds in two steps: L-aspartate is first activated by ATP to form Asp-AMP and then transferred to the acceptor end of tRNA(Asp/Asn). The sequence is that of Aspartate--tRNA(Asp/Asn) ligase from Herminiimonas arsenicoxydans.